Reading from the N-terminus, the 121-residue chain is Large ribosomal subunit protein uL24 (121 aa).

Belongs to the universal ribosomal protein uL24 family. As to quaternary structure, part of the 50S ribosomal subunit.

One of two assembly initiator proteins, it binds directly to the 5'-end of the 23S rRNA, where it nucleates assembly of the 50S subunit. Functionally, located at the polypeptide exit tunnel on the outside of the subunit. In Methanocorpusculum labreanum (strain ATCC 43576 / DSM 4855 / Z), this protein is Large ribosomal subunit protein uL24.